We begin with the raw amino-acid sequence, 99 residues long: Integration host factor subunit alpha (99 aa).

The protein belongs to the bacterial histone-like protein family. In terms of assembly, heterodimer of an alpha and a beta chain.

Its function is as follows. This protein is one of the two subunits of integration host factor, a specific DNA-binding protein that functions in genetic recombination as well as in transcriptional and translational control. This Enterobacter sp. (strain 638) protein is Integration host factor subunit alpha.